Here is a 185-residue protein sequence, read N- to C-terminus: Elongation factor P (185 aa).

It belongs to the elongation factor P family.

It is found in the cytoplasm. It functions in the pathway protein biosynthesis; polypeptide chain elongation. Involved in peptide bond synthesis. Stimulates efficient translation and peptide-bond synthesis on native or reconstituted 70S ribosomes in vitro. Probably functions indirectly by altering the affinity of the ribosome for aminoacyl-tRNA, thus increasing their reactivity as acceptors for peptidyl transferase. This Streptococcus pyogenes serotype M4 (strain MGAS10750) protein is Elongation factor P.